The chain runs to 89 residues: Small ribosomal subunit protein uS15 (89 aa).

This sequence belongs to the universal ribosomal protein uS15 family. In terms of assembly, part of the 30S ribosomal subunit. Forms a bridge to the 50S subunit in the 70S ribosome, contacting the 23S rRNA.

One of the primary rRNA binding proteins, it binds directly to 16S rRNA where it helps nucleate assembly of the platform of the 30S subunit by binding and bridging several RNA helices of the 16S rRNA. Functionally, forms an intersubunit bridge (bridge B4) with the 23S rRNA of the 50S subunit in the ribosome. The sequence is that of Small ribosomal subunit protein uS15 from Beijerinckia indica subsp. indica (strain ATCC 9039 / DSM 1715 / NCIMB 8712).